The primary structure comprises 215 residues: E3 ubiquitin-protein ligase NleG (215 aa).

The RING/U-box domain stretch occupies residues 136–189; sequence CPITLCIPETGVFVRNAKNSEICSLYDHNALTELIRRNAPHPLSREPFVPEMIV. The PDZ-binding motif motif lies at 213–215; that stretch reads TRI.

This sequence belongs to the NleG E3 ligase family. In terms of assembly, interacts with host GOPC (human protein). Two sizes of protein are detected upon expression in C.rodentium; only the smaller protein is secreted.

The protein resides in the secreted. Its subcellular location is the host cytoplasm. The catalysed reaction is S-ubiquitinyl-[E2 ubiquitin-conjugating enzyme]-L-cysteine + [acceptor protein]-L-lysine = [E2 ubiquitin-conjugating enzyme]-L-cysteine + N(6)-ubiquitinyl-[acceptor protein]-L-lysine.. Effector proteins function to alter host cell physiology and promote bacterial survival in host tissues. This protein is an E3 ubiquitin-protein ligase that probably interferes with the host's ubiquitination pathway and targets host proteins for proteasomal degradation. Can ubiquitinate ubiquitin, giving rise to polyubiquitin chains (in vitro). Does not complement an nleG8 deletion in C.rodentium. This Escherichia coli O157:H7 protein is E3 ubiquitin-protein ligase NleG.